The primary structure comprises 214 residues: Probable nicotinate-nucleotide adenylyltransferase (214 aa).

The protein belongs to the NadD family.

The enzyme catalyses nicotinate beta-D-ribonucleotide + ATP + H(+) = deamido-NAD(+) + diphosphate. It functions in the pathway cofactor biosynthesis; NAD(+) biosynthesis; deamido-NAD(+) from nicotinate D-ribonucleotide: step 1/1. Functionally, catalyzes the reversible adenylation of nicotinate mononucleotide (NaMN) to nicotinic acid adenine dinucleotide (NaAD). This is Probable nicotinate-nucleotide adenylyltransferase from Rhodopirellula baltica (strain DSM 10527 / NCIMB 13988 / SH1).